The sequence spans 124 residues: MVPRISAAIFIFELLGSNSEGVTDLRLWLCQPAPRCGEWTYNPLEQCCDDGVILDLNQTRLCGSSCTFWPCFQHCCLESLGSQNQTVVRFKVPGMKPDCKSSPITRICAQEYHPKSPVSRSDLI.

The signal sequence occupies residues 1–19 (MVPRISAAIFIFELLGSNS). N-linked (GlcNAc...) asparagine glycans are attached at residues asparagine 57 and asparagine 84.

It belongs to the IGFL family. In terms of tissue distribution, detected in the cerebellum.

It localises to the secreted. In Homo sapiens (Human), this protein is Insulin growth factor-like family member 4 (IGFL4).